Consider the following 139-residue polypeptide: Nucleoside diphosphate kinase (139 aa).

6 residues coordinate ATP: K10, F58, R86, T92, R103, and N113. H116 (pros-phosphohistidine intermediate) is an active-site residue.

Belongs to the NDK family. In terms of assembly, homotetramer. Mg(2+) is required as a cofactor.

The protein resides in the cytoplasm. It catalyses the reaction a 2'-deoxyribonucleoside 5'-diphosphate + ATP = a 2'-deoxyribonucleoside 5'-triphosphate + ADP. The enzyme catalyses a ribonucleoside 5'-diphosphate + ATP = a ribonucleoside 5'-triphosphate + ADP. Functionally, major role in the synthesis of nucleoside triphosphates other than ATP. The ATP gamma phosphate is transferred to the NDP beta phosphate via a ping-pong mechanism, using a phosphorylated active-site intermediate. The sequence is that of Nucleoside diphosphate kinase from Nitratidesulfovibrio vulgaris (strain DSM 19637 / Miyazaki F) (Desulfovibrio vulgaris).